The sequence spans 92 residues: Putative pterin-4-alpha-carbinolamine dehydratase (92 aa).

The protein belongs to the pterin-4-alpha-carbinolamine dehydratase family.

The catalysed reaction is (4aS,6R)-4a-hydroxy-L-erythro-5,6,7,8-tetrahydrobiopterin = (6R)-L-erythro-6,7-dihydrobiopterin + H2O. The sequence is that of Putative pterin-4-alpha-carbinolamine dehydratase from Cereibacter sphaeroides (strain ATCC 17023 / DSM 158 / JCM 6121 / CCUG 31486 / LMG 2827 / NBRC 12203 / NCIMB 8253 / ATH 2.4.1.) (Rhodobacter sphaeroides).